Consider the following 244-residue polypeptide: Glycoprotein 3 (244 aa).

In terms of biological role, although P4 acquires its capsid proteins from helper phages such as P2, it possesses the ability to assemble capsids that are only one-third the size of the helper's capsid. The sid protein is responsible for the assembly of P4-sized shells. It forms a P4-specific scaffold with icosahedral symmetry on the outside of the procapsid-like particles. This chain is Glycoprotein 3 (sid), found in Enterobacteria phage P4 (Bacteriophage P4).